A 1385-amino-acid polypeptide reads, in one-letter code: MEDYFTGSFFDKPKDPLHFSAIRISISSPEKIRERSFGEVKKPETINYRTFKPERDGLFCAKIFGPTKDYECNCGKYKRMKHRGIICEKCGVEVIPSKVRRERLGHIDLATPVAHIWFLKSLPSRIGNLLDITLKDLERVLYFEAFAITDPGTTPLKFCEVLSEDKFLKAQEEYGIDAFEGGMGAEAVRKCLQALELDELAVQLRMEMMESTSEAKRKKVAKRLKVVEAFKQSGNKPEWMILECIPVLPPELRPLVPLDGGRFATSDLNDLYRRVINRNNRLKRLCELQAPEVIIRNEKRMLQEAVDALFDNGRRGRAIAGPNKRPLKSLSDMLKGKSGRFRQNLLGKRVDYSGRSVIVVGPELKLHQCGLPKKMALELFKPFIYNKLEERGYVTTIKSAKKMVEKERPEVWDVLEEVIREHPVMLNRAPTLHRLGIQAFEPVLIEGKAIQLHPLVCTAFNADFDGDQMAVHLPLSIESQVETRVLMMSTNNILSPAHGKPIIVPSQDMVLGTYYMTRERIGAKGERTTFASPEEVRIAFDHGEVDMQARVKVRMIDAPDNPDEKPQLVDTTVGRIILREVLPPQVPFSAINKVMNKKELSNLIDTCYRLAGNKETVILADRLKETGFRYANLAGISICIDDMVIPEGKQAIIDRANEEVQEIQNQYTEGLITDGERYNKVIDIWAKSTEEIAKEMLGNLSKEIVVDSDGKEVEIPSFNAIHMMADSGARGSAQQIRQLAGMRGLMAKPSGEIIETPITANFREGLTVLQYFISTHGARKGLADTALKTANSGYLTRRLVDVAQDAIITEDDCGTLDGLTVSSLTEGGEVIEHIGDRILGRVALDDIHDPITDEILVEANQEIDENLVKKIEDAGLEKVKMRSVLTCQSKRGICAKCYGRDLARGHIVNMGEAVGVIAAQSIGEPGTQLTMRTFHIGGTASRAAEQTSLEARYEGLVKYINLHTVVNAEGFHIVMSRNGEVAVVDETGRERERYGVVYGAKLKIAPEGSVKAGETLAEWDPYTMPILTEVGGRVKFGDIIEGVTMEEKLDDVTGLSRKEIVETKDSDKRPRIAIKDAGESGGTIGRYYLPVGAIINVTEDAVICGGDIIAKIPRETTKTKDITGGLPRVAELFEARKPKDFAVITEIDGKVNFGKDSKGKRKVVVTPELGEPKEYLIPKGKHISVHEGDYVRAGEPLMDGSSNPHDILRVLGVKELAKYLVDEVQEVYRLQGVKINDKHIEVIVRQMLRRVRIKEVGDTNLLIDDQVERYVFEEENAKAFAEGKRPATAEPLLLGITKASLSTESFISAASFQETTKVLTQAAIEGKVDALRGLKENVIMGRLIPAGTGIPRYRHLRLHVEEQTGEQAVTQLDAAPDLDAEQQAA.

Zn(2+) is bound by residues Cys-72, Cys-74, Cys-87, and Cys-90. Residues Asp-463, Asp-465, and Asp-467 each coordinate Mg(2+). The Zn(2+) site is built by Cys-813, Cys-887, Cys-894, and Cys-897.

Belongs to the RNA polymerase beta' chain family. As to quaternary structure, the RNAP catalytic core consists of 2 alpha, 1 beta, 1 beta' and 1 omega subunit. When a sigma factor is associated with the core the holoenzyme is formed, which can initiate transcription. The cofactor is Mg(2+). Requires Zn(2+) as cofactor.

It catalyses the reaction RNA(n) + a ribonucleoside 5'-triphosphate = RNA(n+1) + diphosphate. In terms of biological role, DNA-dependent RNA polymerase catalyzes the transcription of DNA into RNA using the four ribonucleoside triphosphates as substrates. The protein is DNA-directed RNA polymerase subunit beta' of Trichlorobacter lovleyi (strain ATCC BAA-1151 / DSM 17278 / SZ) (Geobacter lovleyi).